A 106-amino-acid polypeptide reads, in one-letter code: Small ribosomal subunit protein uS10 (106 aa).

It belongs to the universal ribosomal protein uS10 family. Part of the 30S ribosomal subunit.

In terms of biological role, involved in the binding of tRNA to the ribosomes. This is Small ribosomal subunit protein uS10 from Pyrobaculum neutrophilum (strain DSM 2338 / JCM 9278 / NBRC 100436 / V24Sta) (Thermoproteus neutrophilus).